The primary structure comprises 325 residues: MACGEFSLIARYFDRVRSSRLDVETGIGDDCALLNIPEKQTLAISTDTLVAGNHFLPDIDPADLAYKALAVNLSDLAAMGADPAWLTLALTLPEVDEPWLEAFSDSLFALLNYYDMQLIGGDTTRGPLSMTLGIHGYIPAGRALKRSGAKPGDWIYVTGTPGDSAAGLAVLQNRLQVSEETDAHYLIQRHLRPTPRILHGQALRDIASAAIDLSDGLISDLGHIVKASGCGARVDVDALPKSDAMMRHVDDGQALRWALSGGEDYELCFTVPELNRGALDVAIGQLGVPFTCIGQMSADIEGLNFVRDGMPVTFDWKGYDHFATP.

D30, S45, T46, and D47 together coordinate Mg(2+). H54 serves as a coordination point for substrate. Positions 75 and 122 each coordinate Mg(2+). ATP contacts are provided by residues 121–122 (GD) and R146. Mg(2+) is bound at residue D212. An ATP-binding site is contributed by S214. Residue D215 participates in Mg(2+) binding. Residues E263 and Y319 each coordinate substrate.

This sequence belongs to the thiamine-monophosphate kinase family.

The enzyme catalyses thiamine phosphate + ATP = thiamine diphosphate + ADP. Its pathway is cofactor biosynthesis; thiamine diphosphate biosynthesis; thiamine diphosphate from thiamine phosphate: step 1/1. Its function is as follows. Catalyzes the ATP-dependent phosphorylation of thiamine-monophosphate (TMP) to form thiamine-pyrophosphate (TPP), the active form of vitamin B1. This is Thiamine-monophosphate kinase (thiL) from Salmonella typhimurium (strain LT2 / SGSC1412 / ATCC 700720).